We begin with the raw amino-acid sequence, 283 residues long: Pantothenate synthetase (283 aa).

ATP is bound at residue 30-37 (MGNLHAGH). His37 serves as the catalytic Proton donor. Gln61 provides a ligand contact to (R)-pantoate. Residue Gln61 coordinates beta-alanine. ATP is bound at residue 149–152 (GEKD). Gln155 provides a ligand contact to (R)-pantoate. ATP contacts are provided by residues Leu178 and 186-189 (MSSR).

This sequence belongs to the pantothenate synthetase family. Homodimer.

The protein localises to the cytoplasm. It carries out the reaction (R)-pantoate + beta-alanine + ATP = (R)-pantothenate + AMP + diphosphate + H(+). Its pathway is cofactor biosynthesis; (R)-pantothenate biosynthesis; (R)-pantothenate from (R)-pantoate and beta-alanine: step 1/1. Its function is as follows. Catalyzes the condensation of pantoate with beta-alanine in an ATP-dependent reaction via a pantoyl-adenylate intermediate. The protein is Pantothenate synthetase of Hahella chejuensis (strain KCTC 2396).